Consider the following 188-residue polypeptide: Ion-translocating oxidoreductase complex subunit B (188 aa).

A hydrophobic region spans residues 1–23 (MFTAIWVMVGLAIAIGLILGWSA). Positions 29 to 88 (EGNPLAEKIDAILPQTQCGQCGFPGCRPYAEAIAKGEADINQCPPGGEEGVKKLAELLGV) constitute a 4Fe-4S domain. 12 residues coordinate [4Fe-4S] cluster: Cys46, Cys49, Cys54, Cys71, Cys113, Cys116, Cys119, Cys123, Cys143, Cys146, Cys149, and Cys153. 4Fe-4S ferredoxin-type domains follow at residues 104–133 (SVAF…GAAK) and 134–163 (QMHT…MVPI).

The protein belongs to the 4Fe4S bacterial-type ferredoxin family. RnfB subfamily. As to quaternary structure, the complex is composed of six subunits: RnfA, RnfB, RnfC, RnfD, RnfE and RnfG. [4Fe-4S] cluster is required as a cofactor.

Its subcellular location is the cell inner membrane. Its function is as follows. Part of a membrane-bound complex that couples electron transfer with translocation of ions across the membrane. The sequence is that of Ion-translocating oxidoreductase complex subunit B from Thiobacillus denitrificans (strain ATCC 25259 / T1).